Consider the following 335-residue polypeptide: Probable deoxyhypusine synthase (335 aa).

The active-site Nucleophile is Lys-307.

Belongs to the deoxyhypusine synthase family. Requires NAD(+) as cofactor.

The catalysed reaction is [eIF5A protein]-L-lysine + spermidine = [eIF5A protein]-deoxyhypusine + propane-1,3-diamine. It functions in the pathway protein modification; eIF5A hypusination. In terms of biological role, catalyzes the NAD-dependent oxidative cleavage of spermidine and the subsequent transfer of the butylamine moiety of spermidine to the epsilon-amino group of a specific lysine residue of the eIF-5A precursor protein to form the intermediate deoxyhypusine residue. This is Probable deoxyhypusine synthase (dys) from Pyrococcus abyssi (strain GE5 / Orsay).